Reading from the N-terminus, the 483-residue chain is RNA-binding protein Nova-1 (483 aa).

A disordered region spans residues 1–44; sequence MMAAAPIQQNGTHTGVPIDLDPPDSRKRPLEAPPEAGSTKRTNT. Residues 27–43 carry the Bipartite nuclear localization signal motif; that stretch reads KRPLEAPPEAGSTKRTN. 3 KH domains span residues 49–116, 147–213, and 397–464; these read QYFL…HGFI, IKQV…VELI, and KDVV…QYLI. The tract at residues 395–479 is required for RNA binding; it reads GSKDVVEIAV…YEQGVRAANP (85 aa).

Interacts with PTBP2; the interaction is direct.

The protein localises to the nucleus. Its function is as follows. Functions to regulate alternative splicing in neurons by binding pre-mRNA in a sequence-specific manner to activate exon inclusion or exclusion. It binds specifically to the sequences 5'-YCAY-3' and regulates splicing in only a subset of regulated exons. Binding to an exonic 5'-YCAY-3' cluster changes the protein complexes assembled on pre-mRNA, blocking U1 snRNP binding and exon inclusion, whereas binding to an intronic 5'-YCAY-3' cluster enhances spliceosome assembly and exon inclusion. Binding to 5'-YCAY-3' clusters results in a local and asymmetric action to regulate spliceosome assembly and alternative splicing in neurons. Binding to an exonic 5'-YCAY-3' cluster changed the protein complexes assembled on pre-mRNA, blocking U1 snRNP (small nuclear ribonucleoprotein) binding and exon inclusion, whereas binding to an intronic 5'-YCAY-3' cluster enhanced spliceosome assembly and exon inclusion. With NOVA1, they perform unique biological functions in different brain areas and cell types. Autoregulates its own expression by acting as a splicing repressor. Acts to activate the inclusion of exon E3A in the glycine receptor alpha-2 chain and of exon E9 in gamma-aminobutyric-acid receptor gamma-2 subunit via a distal downstream UCAU-rich intronic splicing enhancer. Acts to regulate a novel glycine receptor alpha-2 chain splice variant (alpha-2N) in developing spinal cord. The chain is RNA-binding protein Nova-1 (NOVA1) from Macaca fascicularis (Crab-eating macaque).